Consider the following 158-residue polypeptide: Endoribonuclease YbeY (158 aa).

The Zn(2+) site is built by histidine 124, histidine 128, and histidine 134.

The protein belongs to the endoribonuclease YbeY family. It depends on Zn(2+) as a cofactor.

It localises to the cytoplasm. Functionally, single strand-specific metallo-endoribonuclease involved in late-stage 70S ribosome quality control and in maturation of the 3' terminus of the 16S rRNA. The protein is Endoribonuclease YbeY of Caldicellulosiruptor bescii (strain ATCC BAA-1888 / DSM 6725 / KCTC 15123 / Z-1320) (Anaerocellum thermophilum).